We begin with the raw amino-acid sequence, 230 residues long: Phosphoribosylformylglycinamidine synthase subunit PurQ (230 aa).

The Glutamine amidotransferase type-1 domain maps to 3-230 (SAIIVFPGTN…LFQSIVESLS (228 aa)). The active-site Nucleophile is cysteine 87. Residues histidine 204 and glutamate 206 contribute to the active site.

Part of the FGAM synthase complex composed of 1 PurL, 1 PurQ and 2 PurS subunits.

It is found in the cytoplasm. The catalysed reaction is N(2)-formyl-N(1)-(5-phospho-beta-D-ribosyl)glycinamide + L-glutamine + ATP + H2O = 2-formamido-N(1)-(5-O-phospho-beta-D-ribosyl)acetamidine + L-glutamate + ADP + phosphate + H(+). It catalyses the reaction L-glutamine + H2O = L-glutamate + NH4(+). It functions in the pathway purine metabolism; IMP biosynthesis via de novo pathway; 5-amino-1-(5-phospho-D-ribosyl)imidazole from N(2)-formyl-N(1)-(5-phospho-D-ribosyl)glycinamide: step 1/2. Its function is as follows. Part of the phosphoribosylformylglycinamidine synthase complex involved in the purines biosynthetic pathway. Catalyzes the ATP-dependent conversion of formylglycinamide ribonucleotide (FGAR) and glutamine to yield formylglycinamidine ribonucleotide (FGAM) and glutamate. The FGAM synthase complex is composed of three subunits. PurQ produces an ammonia molecule by converting glutamine to glutamate. PurL transfers the ammonia molecule to FGAR to form FGAM in an ATP-dependent manner. PurS interacts with PurQ and PurL and is thought to assist in the transfer of the ammonia molecule from PurQ to PurL. This Rhodospirillum rubrum (strain ATCC 11170 / ATH 1.1.1 / DSM 467 / LMG 4362 / NCIMB 8255 / S1) protein is Phosphoribosylformylglycinamidine synthase subunit PurQ.